The following is a 302-amino-acid chain: N-acetylmuramic acid 6-phosphate etherase (302 aa).

The SIS domain maps to 55-218; it reads AYPKFDQGGR…STGIMVKSGK (164 aa). Residue Glu-83 is the Proton donor of the active site. Residue Glu-114 is part of the active site.

The protein belongs to the GCKR-like family. MurNAc-6-P etherase subfamily. Homodimer.

The catalysed reaction is N-acetyl-D-muramate 6-phosphate + H2O = N-acetyl-D-glucosamine 6-phosphate + (R)-lactate. It functions in the pathway amino-sugar metabolism; N-acetylmuramate degradation. Functionally, specifically catalyzes the cleavage of the D-lactyl ether substituent of MurNAc 6-phosphate, producing GlcNAc 6-phosphate and D-lactate. The protein is N-acetylmuramic acid 6-phosphate etherase of Levilactobacillus brevis (strain ATCC 367 / BCRC 12310 / CIP 105137 / JCM 1170 / LMG 11437 / NCIMB 947 / NCTC 947) (Lactobacillus brevis).